The following is an 851-amino-acid chain: DNA mismatch repair protein MutS (851 aa).

Residue 602 to 609 participates in ATP binding; sequence GPNMSGKS.

Belongs to the DNA mismatch repair MutS family.

This protein is involved in the repair of mismatches in DNA. It is possible that it carries out the mismatch recognition step. This protein has a weak ATPase activity. The protein is DNA mismatch repair protein MutS of Streptococcus pyogenes serotype M18 (strain MGAS8232).